The sequence spans 226 residues: NADH-ubiquinone oxidoreductase 19.3 kDa subunit, mitochondrial (226 aa).

The interval 40-68 (ATGAVAPAGAQHGIARRERREVPLPSQEG) is disordered. 4 residues coordinate [4Fe-4S] cluster: Cys-101, Cys-102, Cys-166, and Cys-196.

This sequence belongs to the complex I 20 kDa subunit family. In terms of assembly, complex I is composed of about 40 different subunits. This is a component of the iron-sulfur (IP) fragment of the enzyme. [4Fe-4S] cluster is required as a cofactor.

Its subcellular location is the mitochondrion. It catalyses the reaction a ubiquinone + NADH + 5 H(+)(in) = a ubiquinol + NAD(+) + 4 H(+)(out). Core subunit of the mitochondrial membrane respiratory chain NADH dehydrogenase (Complex I) that is believed to belong to the minimal assembly required for catalysis. Complex I functions in the transfer of electrons from NADH to the respiratory chain. The immediate electron acceptor for the enzyme is believed to be ubiquinone. The polypeptide is NADH-ubiquinone oxidoreductase 19.3 kDa subunit, mitochondrial (Neurospora crassa (strain ATCC 24698 / 74-OR23-1A / CBS 708.71 / DSM 1257 / FGSC 987)).